A 397-amino-acid chain; its full sequence is Acetyl-CoA acetyltransferase (397 aa).

The active-site Acyl-thioester intermediate is the cysteine 95. Residues tyrosine 187 and lysine 230 each coordinate CoA. Tyrosine 187 contacts K(+). Positions 246, 247, and 249 each coordinate K(+). Serine 250 is a CoA binding site. Position 347 (valine 347) interacts with K(+). Catalysis depends on proton acceptor residues histidine 351 and cysteine 379.

This sequence belongs to the thiolase-like superfamily. Thiolase family.

Its subcellular location is the peroxisome. It carries out the reaction 2 acetyl-CoA = acetoacetyl-CoA + CoA. Functionally, essential for n-decane utilization. The protein is Acetyl-CoA acetyltransferase (PAT1) of Yarrowia lipolytica (strain CLIB 122 / E 150) (Yeast).